We begin with the raw amino-acid sequence, 263 residues long: L-erythrulose-1-phosphate isomerase (263 aa).

The active-site Electrophile is the H106. E178 acts as the Proton acceptor in catalysis.

This sequence belongs to the triosephosphate isomerase family.

The enzyme catalyses L-erythrulose 1-phosphate = D-erythrulose 4-phosphate. It functions in the pathway carbohydrate metabolism; L-threitol degradation. In terms of biological role, catalyzes the isomerization of L-erythrulose-1P to D-erythrulose-4P. Involved in the degradation pathway of L-threitol, that allows M.smegmatis to grow on this compound as the sole carbon source. The chain is L-erythrulose-1-phosphate isomerase from Mycolicibacterium smegmatis (strain ATCC 700084 / mc(2)155) (Mycobacterium smegmatis).